The primary structure comprises 221 residues: Guanylate kinase (221 aa).

Residues 18-196 (GFLFILSSPS…SASLIKSIYL (179 aa)) form the Guanylate kinase-like domain. 25–32 (SPSGAGKS) contacts ATP.

The protein belongs to the guanylate kinase family.

It is found in the cytoplasm. It catalyses the reaction GMP + ATP = GDP + ADP. In terms of biological role, essential for recycling GMP and indirectly, cGMP. This is Guanylate kinase from Bartonella quintana (strain Toulouse) (Rochalimaea quintana).